Consider the following 992-residue polypeptide: MSPAMANPRVRKFNPIAFTPLPVTFITTIVYLAVLILVLVTYLVVPPAPTLEMSPKGVNLTEAWRDLQHLTEGFHPYNSRRNDDVHAWLLHRIEAIVRESASADGGPEVFVFDDNLSNLTYSNGGVSKSPIVGVYFESTNIIVYIRGSEDDPQNWWEWSNGKPKGKGGVLVNAHYDSVSTGYGATDDGMGVVSLLQLLRYFTTAGNKPRKGLVLLFNNGEEDYLNGARVYSQHAMSNFTHTFLNLEGAGAGGRACLFRSTDTEVTRFYKNAKHPFGSVLAGDGFKLGLIRSQTDYVVFNGVLGLRGLDVSFIAPRSRYHTDQDDARHTNVDSLWHMLSVAIGTTEGLVSYTGTDFDSKTTDQDKVNSGDGTLGIWFDIFGSAFAVFRLHTLFALSVTLLVIGPLVLFITSIALSKTDRMYLFSMSKSLGGASETVSLRGLRGLFRTPIILTVTTVIPIGLAYLLEKINPYIVHSSQFAVWSMMLSVWIFVAWFLARVADFFRPSALHRAYSYTWIFIVTWIMLVISTVYANQKGIAAGYFTFFYFAAVFLATWVSYLELFSLPRKGYYARQASRRQKRRSSSLSSRLLTPSADELPSDIGPNGAENVGDPDETDPTESTSLLRGQRTTFANYRTGGDDWVTEYTAEDEHVREASIFGHEQSWSWTLPRWTWILQLLLLAPIVIILVGQVGLLLTTAMSQIGSDGVSTFIVYLACALFSTLLFAPLLPFIHRFTYHVPTFLLLIFIGTLIYNLVAFPFSPANRLKIFFIQEVNLDDGTNKVSLTGIQPYLTDTINAIPSAAGQTANCTQGPFGSLVRCSWSGLPPRVVKEDPGNDQTMGPYTWISYNITRTVGKNEARIKVSGRNTRACKLKFDNPVADYRISGSAVDHRLPHTSRQGVAEIRLWSRTWENTWVVDVDWHSNPVNPGESKDGDEKQDVSKNELSGKVICLWSDNNESGVIPALDEVRLYAPAWVAISKSADGLVEASHDFIIQ.

At 1-24 the chain is on the cytoplasmic side; sequence MSPAMANPRVRKFNPIAFTPLPVT. The chain crosses the membrane as a helical span at residues 25 to 45; sequence FITTIVYLAVLILVLVTYLVV. The Vacuolar segment spans residues 46–390; sequence PPAPTLEMSP…SAFAVFRLHT (345 aa). N-linked (GlcNAc...) asparagine glycosylation is found at Asn59, Asn115, and Asn118. Residues His174 and Asp186 each coordinate Zn(2+). Glu220 acts as the Proton acceptor in catalysis. Residue Glu221 coordinates Zn(2+). N-linked (GlcNAc...) asparagine glycosylation occurs at Asn237. Zn(2+) is bound by residues Glu246 and His319. Residues 391-411 form a helical membrane-spanning segment; it reads LFALSVTLLVIGPLVLFITSI. Residues 412–446 lie on the Cytoplasmic side of the membrane; sequence ALSKTDRMYLFSMSKSLGGASETVSLRGLRGLFRT. The helical transmembrane segment at 447-467 threads the bilayer; sequence PIILTVTTVIPIGLAYLLEKI. Residues 468-474 are Vacuolar-facing; that stretch reads NPYIVHS. The helical transmembrane segment at 475 to 495 threads the bilayer; sequence SQFAVWSMMLSVWIFVAWFLA. Residues 496–508 lie on the Cytoplasmic side of the membrane; the sequence is RVADFFRPSALHR. The chain crosses the membrane as a helical span at residues 509 to 529; sequence AYSYTWIFIVTWIMLVISTVY. The Vacuolar portion of the chain corresponds to 530 to 533; that stretch reads ANQK. Residues 534 to 554 form a helical membrane-spanning segment; that stretch reads GIAAGYFTFFYFAAVFLATWV. Residues 555–671 are Cytoplasmic-facing; sequence SYLELFSLPR…WSWTLPRWTW (117 aa). The interval 579 to 620 is disordered; sequence RSSSLSSRLLTPSADELPSDIGPNGAENVGDPDETDPTESTS. A helical membrane pass occupies residues 672 to 692; it reads ILQLLLLAPIVIILVGQVGLL. At 693-708 the chain is on the vacuolar side; it reads LTTAMSQIGSDGVSTF. The chain crosses the membrane as a helical span at residues 709–729; it reads IVYLACALFSTLLFAPLLPFI. The Cytoplasmic segment spans residues 730 to 736; sequence HRFTYHV. A helical transmembrane segment spans residues 737–757; that stretch reads PTFLLLIFIGTLIYNLVAFPF. Topologically, residues 758 to 992 are vacuolar; sequence SPANRLKIFF…VEASHDFIIQ (235 aa). Residues Asn805, Asn846, and Asn954 are each glycosylated (N-linked (GlcNAc...) asparagine).

This sequence belongs to the peptidase M28 family. The cofactor is Zn(2+).

It localises to the vacuole membrane. Its function is as follows. May be involved in vacuolar sorting and osmoregulation. The chain is Vacuolar membrane protease from Paracoccidioides brasiliensis (strain Pb03).